A 149-amino-acid chain; its full sequence is MNVFLSKYVNGVDKKSRVSVPANYRAVLGKELFNGVIAYPSIRNNCIEACGISHIEKLKQMIETLDPYSEERDAFETMIFGEAVQLSFDGDGRVILPQSLMKHAGIEEQACFVGKGVIFEIWQPQNFEKHLKSAQKIAHEQRFTLRNAN.

SpoVT-AbrB domains follow at residues 7–54 (KYVN…GISH) and 83–126 (AVQL…QPQN).

It belongs to the MraZ family. In terms of assembly, forms oligomers.

The protein resides in the cytoplasm. It localises to the nucleoid. The polypeptide is Transcriptional regulator MraZ (Rickettsia akari (strain Hartford)).